The primary structure comprises 210 residues: Flagellar transcriptional regulator FlhC (210 aa).

Zn(2+)-binding residues include Cys-144, Cys-147, Cys-164, and Cys-167.

The protein belongs to the FlhC family. Heterohexamer composed of two FlhC and four FlhD subunits. Each FlhC binds a FlhD dimer, forming a heterotrimer, and a hexamer assembles by dimerization of two heterotrimers. It depends on Zn(2+) as a cofactor.

It is found in the cytoplasm. Functions in complex with FlhD as a master transcriptional regulator that regulates transcription of several flagellar and non-flagellar operons by binding to their promoter region. Activates expression of class 2 flagellar genes, including fliA, which is a flagellum-specific sigma factor that turns on the class 3 genes. Also regulates genes whose products function in a variety of physiological pathways. The polypeptide is Flagellar transcriptional regulator FlhC (Cupriavidus pinatubonensis (strain JMP 134 / LMG 1197) (Cupriavidus necator (strain JMP 134))).